We begin with the raw amino-acid sequence, 369 residues long: Histidinol-phosphate aminotransferase (369 aa).

The residue at position 222 (Lys222) is an N6-(pyridoxal phosphate)lysine.

This sequence belongs to the class-II pyridoxal-phosphate-dependent aminotransferase family. Histidinol-phosphate aminotransferase subfamily. As to quaternary structure, homodimer. The cofactor is pyridoxal 5'-phosphate.

It catalyses the reaction L-histidinol phosphate + 2-oxoglutarate = 3-(imidazol-4-yl)-2-oxopropyl phosphate + L-glutamate. It participates in amino-acid biosynthesis; L-histidine biosynthesis; L-histidine from 5-phospho-alpha-D-ribose 1-diphosphate: step 7/9. The chain is Histidinol-phosphate aminotransferase from Halalkalibacterium halodurans (strain ATCC BAA-125 / DSM 18197 / FERM 7344 / JCM 9153 / C-125) (Bacillus halodurans).